Reading from the N-terminus, the 280-residue chain is Ribosomal protein L11 methyltransferase (280 aa).

Residues Thr131, Gly152, Asp174, and Asn217 each coordinate S-adenosyl-L-methionine.

This sequence belongs to the methyltransferase superfamily. PrmA family.

It localises to the cytoplasm. The enzyme catalyses L-lysyl-[protein] + 3 S-adenosyl-L-methionine = N(6),N(6),N(6)-trimethyl-L-lysyl-[protein] + 3 S-adenosyl-L-homocysteine + 3 H(+). Its function is as follows. Methylates ribosomal protein L11. This is Ribosomal protein L11 methyltransferase from Bacteroides thetaiotaomicron (strain ATCC 29148 / DSM 2079 / JCM 5827 / CCUG 10774 / NCTC 10582 / VPI-5482 / E50).